Reading from the N-terminus, the 396-residue chain is Chalcone synthase B (396 aa).

The active site involves C170.

This sequence belongs to the thiolase-like superfamily. Chalcone/stilbene synthases family.

It catalyses the reaction (E)-4-coumaroyl-CoA + 3 malonyl-CoA + 3 H(+) = 2',4,4',6'-tetrahydroxychalcone + 3 CO2 + 4 CoA. The protein operates within secondary metabolite biosynthesis; flavonoid biosynthesis. The primary product of this enzyme is 4,2',4',6'-tetrahydroxychalcone (also termed naringenin-chalcone or chalcone) which can under specific conditions spontaneously isomerize into naringenin. The polypeptide is Chalcone synthase B (CHSB) (Ipomoea purpurea (Common morning glory)).